A 139-amino-acid polypeptide reads, in one-letter code: Small ribosomal subunit protein bS6 (139 aa).

It belongs to the bacterial ribosomal protein bS6 family.

Functionally, binds together with bS18 to 16S ribosomal RNA. The chain is Small ribosomal subunit protein bS6 from Borreliella afzelii (strain PKo) (Borrelia afzelii).